The sequence spans 561 residues: Type II methyltransferase M.BstVI (561 aa).

Belongs to the N(4)/N(6)-methyltransferase family.

The catalysed reaction is a 2'-deoxyadenosine in DNA + S-adenosyl-L-methionine = an N(6)-methyl-2'-deoxyadenosine in DNA + S-adenosyl-L-homocysteine + H(+). In terms of biological role, a gamma subtype methylase, recognizes the double-stranded sequence 5'-CTCGAG-3', methylates A-5 on both strands, and protects the DNA from cleavage by the BstVI endonuclease. The protein is Type II methyltransferase M.BstVI of Geobacillus stearothermophilus (Bacillus stearothermophilus).